We begin with the raw amino-acid sequence, 364 residues long: Alanine racemase (364 aa).

The active-site Proton acceptor; specific for D-alanine is lysine 34. Lysine 34 carries the N6-(pyridoxal phosphate)lysine modification. Substrate is bound at residue arginine 129. The Proton acceptor; specific for L-alanine role is filled by tyrosine 259. A substrate-binding site is contributed by methionine 307.

Belongs to the alanine racemase family. Pyridoxal 5'-phosphate is required as a cofactor.

The catalysed reaction is L-alanine = D-alanine. Its pathway is amino-acid biosynthesis; D-alanine biosynthesis; D-alanine from L-alanine: step 1/1. Catalyzes the interconversion of L-alanine and D-alanine. May also act on other amino acids. This is Alanine racemase (alr) from Coxiella burnetii (strain RSA 493 / Nine Mile phase I).